The chain runs to 578 residues: Ketol-acid reductoisomerase, chloroplastic (578 aa).

The N-terminal 52 residues, 1–52, are a transit peptide targeting the chloroplast; the sequence is MAASTTLALSHPKTLAAAAAAAPKAPTAPAAVSFPVSHAACAPLAARRRAVT. In terms of domain architecture, KARI N-terminal Rossmann spans 90-288; that stretch reads VRGGRNLFPL…ALGSPFTFAT (199 aa). NADP(+) is bound by residues 111 to 118, 144 to 149, and 183 to 187; these read GVIGWGSQ, RKGSKS, and SDAAQ. His208 is a catalytic residue. 2 KARI C-terminal knotted domains span residues 289–437 and 438–574; these read TLEQ…RPEN and DLGP…RPEL. The Mg(2+) site is built by Asp297, Glu301, Glu474, and Glu478. Ser500 is a binding site for substrate.

Belongs to the ketol-acid reductoisomerase family. Homodimer. It depends on Mg(2+) as a cofactor.

The protein resides in the plastid. Its subcellular location is the chloroplast. The enzyme catalyses (2R)-2,3-dihydroxy-3-methylbutanoate + NADP(+) = (2S)-2-acetolactate + NADPH + H(+). The catalysed reaction is (2R,3R)-2,3-dihydroxy-3-methylpentanoate + NADP(+) = (S)-2-ethyl-2-hydroxy-3-oxobutanoate + NADPH + H(+). It participates in amino-acid biosynthesis; L-isoleucine biosynthesis; L-isoleucine from 2-oxobutanoate: step 2/4. Its pathway is amino-acid biosynthesis; L-valine biosynthesis; L-valine from pyruvate: step 2/4. In Oryza sativa subsp. japonica (Rice), this protein is Ketol-acid reductoisomerase, chloroplastic.